Here is a 185-residue protein sequence, read N- to C-terminus: Transcription termination/antitermination protein NusG (185 aa).

Residues 134–162 (PGQMVRVIDGPFNDFDGLVEEVNYEKNRL) form the KOW domain.

The protein belongs to the NusG family.

Functionally, participates in transcription elongation, termination and antitermination. The sequence is that of Transcription termination/antitermination protein NusG from Xylella fastidiosa (strain Temecula1 / ATCC 700964).